Here is a 287-residue protein sequence, read N- to C-terminus: Probable 3-hydroxybutyryl-CoA dehydrogenase (287 aa).

The protein belongs to the 3-hydroxyacyl-CoA dehydrogenase family.

The catalysed reaction is (3S)-3-hydroxybutanoyl-CoA + NADP(+) = acetoacetyl-CoA + NADPH + H(+). Its pathway is lipid metabolism; butanoate metabolism. The protein is Probable 3-hydroxybutyryl-CoA dehydrogenase (mmgB) of Bacillus subtilis (strain 168).